A 674-amino-acid chain; its full sequence is DNA ligase (674 aa).

NAD(+) is bound by residues 34–38, 84–85, and glutamate 116; these read DAEYD and SL. Residue lysine 118 is the N6-AMP-lysine intermediate of the active site. Arginine 139, glutamate 174, lysine 291, and lysine 315 together coordinate NAD(+). Residues cysteine 409, cysteine 412, cysteine 425, and cysteine 430 each coordinate Zn(2+). The BRCT domain occupies 586 to 674; the sequence is RGEEALKGLT…TGKPVETLAS (89 aa).

This sequence belongs to the NAD-dependent DNA ligase family. LigA subfamily. It depends on Mg(2+) as a cofactor. Mn(2+) serves as cofactor.

It carries out the reaction NAD(+) + (deoxyribonucleotide)n-3'-hydroxyl + 5'-phospho-(deoxyribonucleotide)m = (deoxyribonucleotide)n+m + AMP + beta-nicotinamide D-nucleotide.. Functionally, DNA ligase that catalyzes the formation of phosphodiester linkages between 5'-phosphoryl and 3'-hydroxyl groups in double-stranded DNA using NAD as a coenzyme and as the energy source for the reaction. It is essential for DNA replication and repair of damaged DNA. This is DNA ligase from Thermus scotoductus.